The chain runs to 126 residues: Nucleoside diphosphate kinase B (126 aa).

Residues Lys6, Phe37, Thr68, Arg79, and Asn89 each coordinate ATP. The active-site Pros-phosphohistidine intermediate is the His92.

Belongs to the NDK family. The cofactor is Mg(2+).

Its subcellular location is the cytoplasm. It is found in the nucleus. The protein localises to the cell projection. It localises to the lamellipodium. The protein resides in the ruffle. The catalysed reaction is a 2'-deoxyribonucleoside 5'-diphosphate + ATP = a 2'-deoxyribonucleoside 5'-triphosphate + ADP. It carries out the reaction a ribonucleoside 5'-diphosphate + ATP = a ribonucleoside 5'-triphosphate + ADP. Its function is as follows. Major role in the synthesis of nucleoside triphosphates other than ATP. This chain is Nucleoside diphosphate kinase B (nme2), found in Macruronus magellanicus (Patagonian grenadier).